Reading from the N-terminus, the 279-residue chain is Proteasome subunit beta (279 aa).

Residues 1–53 constitute a propeptide, removed in mature form; by autocatalysis; that stretch reads MAAAFDPSGRLPDLFTSAGTSSFSAFLSMAAPELLPGRRPLPPGTAADLTPHA. The Nucleophile role is filled by Thr54.

This sequence belongs to the peptidase T1B family. As to quaternary structure, the 20S proteasome core is composed of 14 alpha and 14 beta subunits that assemble into four stacked heptameric rings, resulting in a barrel-shaped structure. The two inner rings, each composed of seven catalytic beta subunits, are sandwiched by two outer rings, each composed of seven alpha subunits. The catalytic chamber with the active sites is on the inside of the barrel. Has a gated structure, the ends of the cylinder being occluded by the N-termini of the alpha-subunits. Is capped by the proteasome-associated ATPase, ARC.

It localises to the cytoplasm. It carries out the reaction Cleavage of peptide bonds with very broad specificity.. The protein operates within protein degradation; proteasomal Pup-dependent pathway. With respect to regulation, the formation of the proteasomal ATPase ARC-20S proteasome complex, likely via the docking of the C-termini of ARC into the intersubunit pockets in the alpha-rings, may trigger opening of the gate for substrate entry. Interconversion between the open-gate and close-gate conformations leads to a dynamic regulation of the 20S proteasome proteolysis activity. Its function is as follows. Component of the proteasome core, a large protease complex with broad specificity involved in protein degradation. The chain is Proteasome subunit beta from Salinispora arenicola (strain CNS-205).